A 228-amino-acid polypeptide reads, in one-letter code: Ribosomal RNA small subunit methyltransferase G (228 aa).

S-adenosyl-L-methionine contacts are provided by residues Gly-70, 121 to 122 (AE), and Arg-138.

Belongs to the methyltransferase superfamily. RNA methyltransferase RsmG family.

It is found in the cytoplasm. In terms of biological role, specifically methylates the N7 position of a guanine in 16S rRNA. The chain is Ribosomal RNA small subunit methyltransferase G from Thermotoga sp. (strain RQ2).